Here is a 490-residue protein sequence, read N- to C-terminus: MNFGFLGTILTILLVVGFITNVVLAFVIIFLERDRRTASSTWAWLFVLFVLPVIGFILYLFLGRTVSKKKMEKNNGDELHAFEDLVQDQIDSFDKHNYGYINDQVIKHRDLIRMLLMKQDAFLTENNKIDLFTDGHKLYEKVLEDIYNAQDYIHLEYYTFELDGLGKRILDALETKLKEGLEVKLLYDDVGSKKVRLSKFKHFRALGGEVEAFFPSKVPLINFRMNNRNHRKIIIIDGQIGYIGGFNVGDDYLGLGKLGYWRDTHTRVQGEVIDALQLRFILDWNSQSHRPQFKFDQKYFPKKIGDKGNAAIQIASSGPAFDLHQIEYGYTKMIMSAKKSIYLQSPYFIPDQSYINALKMAANSGVEVNLMIPCKPDHPFVYWATFSNAADLLDSGVNIYTYQNGFIHSKILMIDDEISSIGSANMDFRSFELNFEVNAFIYDEDIAKQLRQAFEKDIEQSKLLTKKVYDKRPLSIKFKEGLAKLISPIL.

2 consecutive transmembrane segments (helical) span residues 9–29 and 42–62; these read ILTI…FVII and WAWL…YLFL. PLD phosphodiesterase domains lie at 225-252 and 403-430; these read MNNR…GDDY and QNGF…DFRS. Active-site residues include H230, K232, D237, H408, K410, and D415.

Belongs to the phospholipase D family. Cardiolipin synthase subfamily.

Its subcellular location is the cell membrane. The catalysed reaction is 2 a 1,2-diacyl-sn-glycero-3-phospho-(1'-sn-glycerol) = a cardiolipin + glycerol. Its function is as follows. Catalyzes the reversible phosphatidyl group transfer from one phosphatidylglycerol molecule to another to form cardiolipin (CL) (diphosphatidylglycerol) and glycerol. The sequence is that of Cardiolipin synthase 1 (cls1) from Staphylococcus epidermidis (strain ATCC 35984 / DSM 28319 / BCRC 17069 / CCUG 31568 / BM 3577 / RP62A).